Reading from the N-terminus, the 1360-residue chain is Probable inactive protein kinase DDB_G0270444 (1360 aa).

WD repeat units lie at residues 44–83 (SSKR…IKQL), 109–152 (IRNI…AVYN), 166–205 (TTSA…IMGT), and 208–247 (GHSR…QITG). A Protein kinase domain is found at 636 to 954 (EKSIQTYLSN…IEQALSHPFI (319 aa)). Low complexity predominate over residues 959–979 (KQQQQQQQQKQQQQQQQQQQQ). Disordered regions lie at residues 959 to 989 (KQQQ…DSLT), 1258 to 1311 (IISE…VEEE), and 1331 to 1360 (EVEE…SNDF). Coiled-coil stretches lie at residues 1014–1269 (SKIK…QEGE) and 1297–1352 (NASD…QVED). The segment covering 1291-1300 (LERDNKNASD) has biased composition (basic and acidic residues). Acidic residues-rich tracts occupy residues 1301-1311 (HDDEQQFVEEE) and 1331-1354 (EVEE…EDDT).

Belongs to the protein kinase superfamily. CMGC Ser/Thr protein kinase family.

The chain is Probable inactive protein kinase DDB_G0270444 from Dictyostelium discoideum (Social amoeba).